A 433-amino-acid polypeptide reads, in one-letter code: Serine--tRNA ligase (433 aa).

An L-serine-binding site is contributed by 235–237 (TSE). 266-268 (RSE) contacts ATP. E289 is a binding site for L-serine. 353–356 (EISS) is a binding site for ATP. S388 contacts L-serine.

This sequence belongs to the class-II aminoacyl-tRNA synthetase family. Type-1 seryl-tRNA synthetase subfamily. In terms of assembly, homodimer. The tRNA molecule binds across the dimer.

It localises to the cytoplasm. It catalyses the reaction tRNA(Ser) + L-serine + ATP = L-seryl-tRNA(Ser) + AMP + diphosphate + H(+). It carries out the reaction tRNA(Sec) + L-serine + ATP = L-seryl-tRNA(Sec) + AMP + diphosphate + H(+). It participates in aminoacyl-tRNA biosynthesis; selenocysteinyl-tRNA(Sec) biosynthesis; L-seryl-tRNA(Sec) from L-serine and tRNA(Sec): step 1/1. Its function is as follows. Catalyzes the attachment of serine to tRNA(Ser). Is also able to aminoacylate tRNA(Sec) with serine, to form the misacylated tRNA L-seryl-tRNA(Sec), which will be further converted into selenocysteinyl-tRNA(Sec). The sequence is that of Serine--tRNA ligase from Burkholderia cenocepacia (strain ATCC BAA-245 / DSM 16553 / LMG 16656 / NCTC 13227 / J2315 / CF5610) (Burkholderia cepacia (strain J2315)).